The chain runs to 331 residues: Pantothenate kinase (331 aa).

109-116 is an ATP binding site; that stretch reads GSVAVGKS.

This sequence belongs to the prokaryotic pantothenate kinase family.

Its subcellular location is the cytoplasm. It catalyses the reaction (R)-pantothenate + ATP = (R)-4'-phosphopantothenate + ADP + H(+). The protein operates within cofactor biosynthesis; coenzyme A biosynthesis; CoA from (R)-pantothenate: step 1/5. This chain is Pantothenate kinase, found in Rhizobium etli (strain CIAT 652).